A 320-amino-acid chain; its full sequence is Agamous-like MADS-box protein AGL90 (320 aa).

The MADS-box domain maps to Met-1–Arg-59. Positions Lys-80–Met-115 form a coiled coil.

Interacts with AGL62.

It is found in the nucleus. Probable transcription factor. This is Agamous-like MADS-box protein AGL90 (AGL90) from Arabidopsis thaliana (Mouse-ear cress).